A 120-amino-acid polypeptide reads, in one-letter code: Ribonuclease P protein component (120 aa).

Belongs to the RnpA family. In terms of assembly, consists of a catalytic RNA component (M1 or rnpB) and a protein subunit.

It catalyses the reaction Endonucleolytic cleavage of RNA, removing 5'-extranucleotides from tRNA precursor.. Functionally, RNaseP catalyzes the removal of the 5'-leader sequence from pre-tRNA to produce the mature 5'-terminus. It can also cleave other RNA substrates such as 4.5S RNA. The protein component plays an auxiliary but essential role in vivo by binding to the 5'-leader sequence and broadening the substrate specificity of the ribozyme. This Mycobacterium marinum (strain ATCC BAA-535 / M) protein is Ribonuclease P protein component.